The sequence spans 472 residues: Kynureninase 2 (472 aa).

Residues leucine 133, threonine 134, 162 to 165 (FPSD), aspartate 247, histidine 250, and tyrosine 272 each bind pyridoxal 5'-phosphate. Lysine 273 is modified (N6-(pyridoxal phosphate)lysine). Tryptophan 314 and asparagine 342 together coordinate pyridoxal 5'-phosphate.

This sequence belongs to the kynureninase family. Homodimer. Pyridoxal 5'-phosphate serves as cofactor.

It is found in the cytoplasm. The enzyme catalyses L-kynurenine + H2O = anthranilate + L-alanine + H(+). It carries out the reaction 3-hydroxy-L-kynurenine + H2O = 3-hydroxyanthranilate + L-alanine + H(+). The protein operates within amino-acid degradation; L-kynurenine degradation; L-alanine and anthranilate from L-kynurenine: step 1/1. Its pathway is cofactor biosynthesis; NAD(+) biosynthesis; quinolinate from L-kynurenine: step 2/3. Catalyzes the cleavage of L-kynurenine (L-Kyn) and L-3-hydroxykynurenine (L-3OHKyn) into anthranilic acid (AA) and 3-hydroxyanthranilic acid (3-OHAA), respectively. In Neurospora crassa (strain ATCC 24698 / 74-OR23-1A / CBS 708.71 / DSM 1257 / FGSC 987), this protein is Kynureninase 2 (kyn-2).